We begin with the raw amino-acid sequence, 251 residues long: Type III pantothenate kinase (251 aa).

6 to 13 (DCGNSFIK) lines the ATP pocket. Residues Tyr-93 and 100–103 (GLDR) each bind substrate. The Proton acceptor role is filled by Asp-102. Asp-122 is a K(+) binding site. Thr-125 provides a ligand contact to ATP. A substrate-binding site is contributed by Thr-182.

It belongs to the type III pantothenate kinase family. In terms of assembly, homodimer. NH4(+) serves as cofactor. It depends on K(+) as a cofactor.

The protein localises to the cytoplasm. The enzyme catalyses (R)-pantothenate + ATP = (R)-4'-phosphopantothenate + ADP + H(+). It functions in the pathway cofactor biosynthesis; coenzyme A biosynthesis; CoA from (R)-pantothenate: step 1/5. Functionally, catalyzes the phosphorylation of pantothenate (Pan), the first step in CoA biosynthesis. The chain is Type III pantothenate kinase from Azotobacter vinelandii (strain DJ / ATCC BAA-1303).